A 786-amino-acid chain; its full sequence is Pentatricopeptide repeat-containing protein At2g22070 (786 aa).

PPR repeat units follow at residues serine 48–arginine 78, threonine 79–arginine 109, aspartate 110–proline 144, threonine 145–glycine 179, asparagine 180–serine 214, tryptophan 215–arginine 241, aspartate 242–serine 276, aspartate 278–isoleucine 312, serine 313–isoleucine 347, phenylalanine 350–arginine 376, aspartate 377–proline 411, asparagine 412–tyrosine 446, serine 447–glutamate 477, aspartate 479–proline 513, aspartate 514–isoleucine 548, and threonine 550–glutamate 580. The type E motif stretch occupies residues threonine 585–lysine 660. The interval histidine 661–lysine 691 is type E(+) motif. The type DYW motif stretch occupies residues lysine 692–tryptophan 786.

The protein belongs to the PPR family. PCMP-H subfamily.

This Arabidopsis thaliana (Mouse-ear cress) protein is Pentatricopeptide repeat-containing protein At2g22070 (PCMP-H41).